A 154-amino-acid polypeptide reads, in one-letter code: Anaerobic ribonucleoside-triphosphate reductase-activating protein (154 aa).

[4Fe-4S] cluster contacts are provided by Cys-26, Cys-30, and Cys-33. Residues 32–34 and Gly-74 contribute to the S-adenosyl-L-methionine site; that span reads GCY.

This sequence belongs to the organic radical-activating enzymes family. As to quaternary structure, forms a tetramer composed of two NrdD and two NrdG subunits. [4Fe-4S] cluster serves as cofactor.

It is found in the cytoplasm. The enzyme catalyses glycyl-[protein] + reduced [flavodoxin] + S-adenosyl-L-methionine = glycin-2-yl radical-[protein] + semiquinone [flavodoxin] + 5'-deoxyadenosine + L-methionine + H(+). Its function is as follows. Activation of anaerobic ribonucleoside-triphosphate reductase under anaerobic conditions by generation of an organic free radical, using S-adenosylmethionine and reduced flavodoxin as cosubstrates to produce 5'-deoxy-adenosine. This is Anaerobic ribonucleoside-triphosphate reductase-activating protein (nrdG) from Salmonella typhi.